The chain runs to 182 residues: ATP synthase subunit b, chloroplastic (182 aa).

Residues 29 to 47 form a helical membrane-spanning segment; that stretch reads IINLALLIVLVINVAKDVL.

The protein belongs to the ATPase B chain family. As to quaternary structure, F-type ATPases have 2 components, F(1) - the catalytic core - and F(0) - the membrane proton channel. F(1) has five subunits: alpha(3), beta(3), gamma(1), delta(1), epsilon(1). F(0) has four main subunits: a(1), b(1), b'(1) and c(10-14). The alpha and beta chains form an alternating ring which encloses part of the gamma chain. F(1) is attached to F(0) by a central stalk formed by the gamma and epsilon chains, while a peripheral stalk is formed by the delta, b and b' chains.

The protein localises to the plastid. It is found in the chloroplast thylakoid membrane. F(1)F(0) ATP synthase produces ATP from ADP in the presence of a proton or sodium gradient. F-type ATPases consist of two structural domains, F(1) containing the extramembraneous catalytic core and F(0) containing the membrane proton channel, linked together by a central stalk and a peripheral stalk. During catalysis, ATP synthesis in the catalytic domain of F(1) is coupled via a rotary mechanism of the central stalk subunits to proton translocation. In terms of biological role, component of the F(0) channel, it forms part of the peripheral stalk, linking F(1) to F(0). This Heterosigma akashiwo (strain NIES-293 / 8280G21-1) protein is ATP synthase subunit b, chloroplastic.